The following is a 235-amino-acid chain: Heme oxygenase (235 aa).

Histidine 19 contributes to the heme b binding site.

It belongs to the heme oxygenase family.

The protein resides in the plastid. It is found in the chloroplast. It catalyses the reaction heme b + 3 reduced [NADPH--hemoprotein reductase] + 3 O2 = biliverdin IXalpha + CO + Fe(2+) + 3 oxidized [NADPH--hemoprotein reductase] + 3 H2O + H(+). Functionally, catalyzes the opening of the heme ring with the release of iron. Key enzyme in the synthesis of the chromophoric part of the photosynthetic antennae. This Rhodella violacea (Red alga) protein is Heme oxygenase (pbsA).